Consider the following 346-residue polypeptide: Short-chain dehydrogenase/reductase bet4 (346 aa).

The segment at 1-35 is disordered; that stretch reads MTPAKAPSHAKKPEAGSQPISSMWTQMFPPKPTYT. Residues valine 56, lysine 80, aspartate 105, and asparagine 132 each coordinate NADP(+). The active-site Proton donor is the serine 191. The NADP(+) site is built by tyrosine 222 and lysine 226. The Proton acceptor role is filled by tyrosine 222. Lysine 226 (lowers pKa of active site Tyr) is an active-site residue.

Belongs to the short-chain dehydrogenases/reductases (SDR) family.

It catalyses the reaction dehydroprobetaenone I + AH2 = probetaenone I + A. It participates in mycotoxin biosynthesis. Short-chain dehydrogenase/reductase; part of the gene cluster that mediates the biosynthesis of betaenones, phytotoxic polyketides involved in leaf spot disease in sugar beets. The first step of the pathway is the synthesis of dehydroprobetaenone I by the polyketide synthase bet1 and the enoyl reductase bet3 via condensation of one acetyl-CoA starter unit with 7 malonyl-CoA units and 5 methylations. The C-terminal reductase (R) domain of bet1 catalyzes the reductive release of the polyketide chain. Because bet1 lacks a designated enoylreductase (ER) domain, the required activity is provided the enoyl reductase bet3. The short-chain dehydrogenase/reductase bet4 then catalyzes reduction of dehydroprobetaenone I to probetaenone I. The cytochrome P450 monooxygenase bet2 catalyzes successive epoxidation, oxidation (resulting from epoxide opening) and hydroxylation to install a tertiary alcohol in the decaline ring to yield betaenone C from dehydroprobetaenone I and betaenone B from probetaenone I. The FAD-linked oxidoreductase (orf1) is probably responsible for the conversion of betaenone C to betaenone A via an intramolecular aldol reaction between C-1 and C-17 to form the bridged tricyclic system in betaenone A. The sequence is that of Short-chain dehydrogenase/reductase bet4 from Neocamarosporium betae (Beet black rot fungus).